Reading from the N-terminus, the 377-residue chain is 5-hydroxytryptamine receptor 1D (377 aa).

N5, N17, and N21 each carry an N-linked (GlcNAc...) asparagine glycan. 3 consecutive transmembrane segments (helical) span residues 39–64 (ISLALLLSIITMATALSNAFVLTTIF), 76–97 (LIGSLAMTDLLVSILVMPISIA), and 110–134 (LCDIWLSSDITCCTASILHLCVIAL). C111 and C188 are disulfide-bonded. Residues D118 and C122 each coordinate serotonin. Positions 135 to 137 (DRY) match the DRY motif; important for ligand-induced conformation changes motif. 4 helical membrane-spanning segments follow: residues 155-176 (AAVMIATVWVISICISIPPLFW), 195-218 (ISYTIYSTCGAFYIPSVLLIILYG), 301-326 (KTLGIILGAFIVCWLPFFVASLVLPI), and 336-359 (ALFDFFTWLGYLNSLINPIIYTVF). S321 provides a ligand contact to serotonin. An NPxxY motif; important for ligand-induced conformation changes and signaling motif is present at residues 352-356 (NPIIY).

This sequence belongs to the G-protein coupled receptor 1 family. As to quaternary structure, homodimer. Heterodimer with HTR1B.

It localises to the cell membrane. Functionally, G-protein coupled receptor for 5-hydroxytryptamine (serotonin). Also functions as a receptor for ergot alkaloid derivatives, various anxiolytic and antidepressant drugs and other psychoactive substances. Ligand binding causes a conformation change that triggers signaling via guanine nucleotide-binding proteins (G proteins) and modulates the activity of downstream effectors, such as adenylate cyclase. HTR1D is coupled to G(i)/G(o) G alpha proteins and mediates inhibitory neurotransmission by inhibiting adenylate cyclase activity. Regulates the release of 5-hydroxytryptamine in the brain, and thereby affects neural activity. May also play a role in regulating the release of other neurotransmitters. May play a role in vasoconstriction. This is 5-hydroxytryptamine receptor 1D (HTR1D) from Canis lupus familiaris (Dog).